Consider the following 1090-residue polypeptide: Exoglucanase B (1090 aa).

Positions 1–33 (MSSTTRRRSAWVAAATVGVSSFLAVAGITPAIA) are cleaved as a signal peptide. Positions 34-53 (AAGAGQPATVTVPAASPVRA) are excised as a propeptide. The tract at residues 54-699 (AVDGEYAQRF…RLFDDGTTTP (646 aa)) is catalytic. The active-site Nucleophile is the Asp513. 3 consecutive Fibronectin type-III domains span residues 706–791 (VPTG…TKAT), 797–887 (APSV…TKSD), and 897–984 (VPAG…TKTP). The CBM2 domain occupies 983-1090 (TPQTGGSCSV…SFTLNGASCT (108 aa)). Cys990 and Cys1089 form a disulfide bridge. The interval 1069–1090 (NGSHTGQNPNPASFTLNGASCT) is disordered. The span at 1070 to 1090 (GSHTGQNPNPASFTLNGASCT) shows a compositional bias: polar residues.

This sequence belongs to the glycosyl hydrolase 48 (cellulase L) family.

It carries out the reaction Hydrolysis of (1-&gt;4)-beta-D-glucosidic linkages in cellulose and cellotetraose, releasing cellobiose from the non-reducing ends of the chains.. Functionally, hydrolyzes cellohexaose to a mixture of cellotetraose, cellotriose and cellobiose, with only a trace of glucose. It hydrolyzed cellopentaose to cellotriose and cellobiose, and cellotetraose to cellobiose, but it did not hydrolyze cellotriose. Also has weak endoglucanase activity. Hydrolyzes glucosidic bonds with inversion of anomeric configuration. This Cellulomonas fimi (strain ATCC 484 / DSM 20113 / JCM 1341 / CCUG 24087 / LMG 16345 / NBRC 15513 / NCIMB 8980 / NCTC 7547 / NRS-133) protein is Exoglucanase B (cbhB).